Reading from the N-terminus, the 1330-residue chain is Pre-mRNA-splicing factor CWC22 homolog (1330 aa).

The segment at 1–377 is disordered; the sequence is MGESDAESDS…AAKITERQRK (377 aa). Residues 9–36 show a composition bias toward low complexity; sequence DSSSNSSSSDTSSGSDSDARSESSSSES. Positions 46–94 are enriched in basic and acidic residues; that stretch reads QEESAKDAKKTDDTDRGEKRAKERDAGQDEQPTEQKKTPAAEPRSERQH. A compositionally biased stretch (low complexity) spans 99 to 113; it reads AGVEKQQEEAVAAAE. The span at 115–135 shows a compositional bias: basic and acidic residues; sequence ESEKLNEAKKVETPVQRKEEA. The segment covering 138–148 has biased composition (polar residues); sequence SSVTKELNSPK. Residues 149 to 166 show a composition bias toward basic and acidic residues; it reads AQEENAARELEERRKDEE. Residues 168 to 177 are compositionally biased toward polar residues; that stretch reads PVTTNGSSKE. Thr-191 and Thr-201 each carry phosphothreonine. Basic and acidic residues-rich tracts occupy residues 191 to 201 and 208 to 236; these read TADHIEEGEIT and LPTK…SPDG. 2 positions are modified to phosphoserine: Ser-219 and Ser-221. A compositionally biased stretch (basic residues) spans 252 to 277; that stretch reads SRRRRRSRSKGSRTRSRSKSPIRRRS. Basic and acidic residues-rich tracts occupy residues 278-307 and 316-325; these read NSLE…EREK and SSRRRDDSRE. Over residues 355 to 366 the composition is skewed to low complexity; sequence TETNADNETVTE. The 184-residue stretch at 420-603 folds into the MIF4G domain; it reads KKSIHGYINK…EVLFQIRKDG (184 aa). The interval 660–697 is disordered; that stretch reads REILGSDDGSSSGSGSGSDSDSDSDGESGSDAEKKAEA. A compositionally biased stretch (low complexity) spans 665 to 678; the sequence is SDDGSSSGSGSGSD. The segment covering 679-689 has biased composition (acidic residues); that stretch reads SDSDSDGESGS. In terms of domain architecture, MI spans 710–826; it reads ALRRTIYLTI…SWDVLECIQL (117 aa). Residues 926-1330 form a disordered region; sequence FRDGSAPAGN…RSSRRSKGRS (405 aa). Residues 941–951 show a composition bias toward low complexity; that stretch reads SSSSSSSSSSD. Acidic residues predominate over residues 952 to 963; it reads TDSEDSSEEDSS. Low complexity predominate over residues 964-976; the sequence is SDSSSESSSSDSS. The segment covering 980-1012 has biased composition (basic residues); sequence KKKRKRKDKDKKKSKKATKEKSKKTKNKKKKKK. The segment covering 1013 to 1033 has biased composition (basic and acidic residues); the sequence is AEKEQEKEKEKQRKSKKEKEK. Residues 1034-1054 show a composition bias toward basic residues; sequence DKKRKKEEKKAAKKKSKHRRK. Positions 1072 to 1082 are enriched in low complexity; that stretch reads SESSDSSNSSS. Residues 1089–1110 are compositionally biased toward basic and acidic residues; sequence PQAKIKRQEHVEKNKFRGRTQD. Thr-1108 carries the phosphothreonine modification. Ser-1111, Ser-1121, Ser-1180, and Ser-1181 each carry phosphoserine. 2 stretches are compositionally biased toward basic and acidic residues: residues 1133-1195 and 1203-1320; these read RRRD…VAHD and SRSY…SRRE. Tyr-1182 carries the post-translational modification Phosphotyrosine. The segment covering 1321–1330 has biased composition (basic residues); it reads RSSRRSKGRS.

This sequence belongs to the CWC22 family. Component of the spliceosome C complex. Interacts with eIF4AIII.

Its subcellular location is the nucleus speckle. Functionally, required for pre-mRNA splicing and for exon-junction complex (EJC) assembly. Hinders eIF4AIII from non-specifically binding RNA and escorts it to the splicing machinery to promote EJC assembly on mature mRNAs. The polypeptide is Pre-mRNA-splicing factor CWC22 homolog (ncm) (Drosophila melanogaster (Fruit fly)).